Reading from the N-terminus, the 316-residue chain is Pantothenate kinase (316 aa).

95–102 serves as a coordination point for ATP; it reads GSVAVGKS.

Belongs to the prokaryotic pantothenate kinase family.

It is found in the cytoplasm. It carries out the reaction (R)-pantothenate + ATP = (R)-4'-phosphopantothenate + ADP + H(+). The protein operates within cofactor biosynthesis; coenzyme A biosynthesis; CoA from (R)-pantothenate: step 1/5. The chain is Pantothenate kinase from Escherichia coli O17:K52:H18 (strain UMN026 / ExPEC).